The sequence spans 305 residues: Serine/threonine-protein phosphatase PP-X homolog 3 (305 aa).

Mn(2+) contacts are provided by aspartate 53, histidine 55, aspartate 81, and asparagine 113. The active-site Proton donor is histidine 114. The Mn(2+) site is built by histidine 163 and histidine 237.

Belongs to the PPP phosphatase family. PP-4 (PP-X) subfamily. Mn(2+) is required as a cofactor.

It carries out the reaction O-phospho-L-seryl-[protein] + H2O = L-seryl-[protein] + phosphate. It catalyses the reaction O-phospho-L-threonyl-[protein] + H2O = L-threonyl-[protein] + phosphate. This is Serine/threonine-protein phosphatase PP-X homolog 3 (Ppx3) from Paramecium tetraurelia.